Consider the following 221-residue polypeptide: Interleukin-12 subunit alpha (221 aa).

Residues 1–25 (MCPLRSLLLISTLVLLHHLPHLSLG) form the signal peptide. Cystine bridges form between Cys39–Cys112, Cys66–Cys198, and Cys87–Cys125. Asn95 carries an N-linked (GlcNAc...) asparagine glycan.

It belongs to the IL-6 superfamily. As to quaternary structure, heterodimer with IL12B; disulfide-linked. This heterodimer is known as interleukin IL-12. Heterodimer with EBI3/IL27B; not disulfide-linked. This heterodimer is known as interleukin IL-35. Interacts with NBR1; this interaction promotes IL-12 secretion.

The protein resides in the secreted. Its function is as follows. Heterodimerizes with IL12B to form the IL-12 cytokine or with EBI3/IL27B to form the IL-35 cytokine. IL-12 is primarily produced by professional antigen-presenting cells (APCs) such as B-cells and dendritic cells (DCs) as well as macrophages and granulocytes and regulates T-cell and natural killer-cell responses, induces the production of interferon-gamma (IFN-gamma), favors the differentiation of T-helper 1 (Th1) cells and is an important link between innate resistance and adaptive immunity. Mechanistically, exerts its biological effects through a receptor composed of IL12R1 and IL12R2 subunits. Binding to the receptor results in the rapid tyrosine phosphorylation of a number of cellular substrates including the JAK family kinases TYK2 and JAK2. In turn, recruited STAT4 gets phosphorylated and translocates to the nucleus where it regulates cytokine/growth factor responsive genes. As part of IL-35, plays essential roles in maintaining the immune homeostasis of the liver microenvironment and also functions as an immune-suppressive cytokine. Mediates biological events through unconventional receptors composed of IL12RB2 and gp130/IL6ST heterodimers or homodimers. Signaling requires the transcription factors STAT1 and STAT4, which form a unique heterodimer that binds to distinct DNA sites. The chain is Interleukin-12 subunit alpha (IL12A) from Capra hircus (Goat).